The primary structure comprises 207 residues: Large ribosomal subunit protein uL3c (207 aa).

The interval 115–151 (IGKGFAGNQKRHNFSRGPMTHGSKNHRLPGSIGAGST) is disordered.

The protein belongs to the universal ribosomal protein uL3 family. In terms of assembly, part of the 50S ribosomal subunit.

It is found in the plastid. The protein resides in the chloroplast. Its function is as follows. One of the primary rRNA binding proteins, it binds directly near the 3'-end of the 23S rRNA, where it nucleates assembly of the 50S subunit. This Emiliania huxleyi (Coccolithophore) protein is Large ribosomal subunit protein uL3c (rpl3).